A 141-amino-acid polypeptide reads, in one-letter code: Large ribosomal subunit protein uL11 (141 aa).

It belongs to the universal ribosomal protein uL11 family. Part of the ribosomal stalk of the 50S ribosomal subunit. Interacts with L10 and the large rRNA to form the base of the stalk. L10 forms an elongated spine to which 2 L12 dimers bind in a sequential fashion forming a pentameric L10(L12)2(L12)2 complex. In stalled/isolated 50S subunits interacts with RqcH. Post-translationally, one or more lysine residues are methylated.

Functionally, forms part of the ribosomal stalk which helps the ribosome interact with GTP-bound translation factors. Required to recruit RqcH, which is part of the ribosome quality control system (RQC), to stalled 50S ribosomal subunits. In Bacillus subtilis (strain 168), this protein is Large ribosomal subunit protein uL11.